Consider the following 287-residue polypeptide: Hydroxysteroid 11-beta-dehydrogenase 1-like protein (287 aa).

Positions 1–20 are cleaved as a signal peptide; the sequence is MMKPFGKVLCAAGSLAVLLA. Residues 41 to 67, 92 to 93, and 119 to 121 contribute to the NADP(+) site; these read GASA…TARR, DM, and NHI. Ser-170 serves as a coordination point for substrate. Tyr-183 (proton acceptor) is an active-site residue. NADP(+) is bound by residues 183–187 and 216–222; these read YSATK and GLIDTDA.

This sequence belongs to the short-chain dehydrogenases/reductases (SDR) family.

The protein localises to the secreted. The catalysed reaction is cortisone + NADPH + H(+) = cortisol + NADP(+). Functionally, unidirectional NADP(+)-dependent cortisol dehydrogenase (in vitro). The sequence is that of Hydroxysteroid 11-beta-dehydrogenase 1-like protein (HSD11B1L) from Gallus gallus (Chicken).